The sequence spans 36 residues: Thrombin (36 aa).

Positions 19–36 (IVKGIDAEVASAPMQVML) constitute a Peptidase S1 domain.

The protein belongs to the peptidase S1 family. As to quaternary structure, forms a heterodimer with SERPINA5. The gamma-carboxyglutamyl residues, which bind calcium ions, result from the carboxylation of glutamyl residues by a microsomal enzyme, the vitamin K-dependent carboxylase. The modified residues are necessary for the calcium-dependent interaction with a negatively charged phospholipid surface, which is essential for the conversion of prothrombin to thrombin. Post-translationally, N-glycosylated. In terms of tissue distribution, expressed by the liver and secreted in plasma.

It is found in the secreted. It catalyses the reaction Selective cleavage of Arg-|-Gly bonds in fibrinogen to form fibrin and release fibrinopeptides A and B.. Its activity is regulated as follows. Inhibited by SERPINA5. Its function is as follows. Thrombin, which cleaves bonds after Arg and Lys, converts fibrinogen to fibrin and activates factors V, VII, VIII, XIII, and, in complex with thrombomodulin, protein C. Functions in blood homeostasis, inflammation and wound healing. In Salmo salar (Atlantic salmon), this protein is Thrombin.